The primary structure comprises 130 residues: Anti-adapter protein IraD (130 aa).

Belongs to the GpW/Gp25 family. IraD subfamily. In terms of assembly, interacts with RssB.

The protein resides in the cytoplasm. In terms of biological role, inhibits RpoS proteolysis by regulating RssB activity, thereby increasing the stability of the sigma stress factor RpoS during oxidative stress. Its effect on RpoS stability is due to its interaction with RssB, which probably blocks the interaction of RssB with RpoS, and the consequent delivery of the RssB-RpoS complex to the ClpXP protein degradation pathway. This Escherichia coli O9:H4 (strain HS) protein is Anti-adapter protein IraD.